The sequence spans 714 residues: Cell wall protein IFF7 (714 aa).

The first 19 residues, 1 to 19 (MLFTLSILSTLLFSTSISA), serve as a signal peptide directing secretion. N-linked (GlcNAc...) asparagine glycosylation is present at Asn-200. A compositionally biased stretch (polar residues) spans 320–330 (GPVPSQKSLPS). Disordered regions lie at residues 320-633 (GPVP…AADS) and 660-692 (PIAN…ANGS). Residues 346–504 (GSSSSSSVVS…SSTPLSGDSS (159 aa)) show a composition bias toward low complexity. N-linked (GlcNAc...) asparagine glycosylation is found at Asn-390, Asn-394, Asn-399, Asn-421, and Asn-473. A compositionally biased stretch (polar residues) spans 505-519 (QVSSLTTGTSPDTIA). A compositionally biased stretch (low complexity) spans 520-544 (SFQTDSTSFGFGSGSPSSGAVQSSG). The span at 545-558 (VTNSTPNTGDVNTQ) shows a compositional bias: polar residues. Composition is skewed to low complexity over residues 559–590 (SNTA…TTTG) and 597–625 (NNNN…NTNN). 4 N-linked (GlcNAc...) asparagine glycosylation sites follow: Asn-577, Asn-621, Asn-624, and Asn-663. Residues 665–679 (SSSPSSSSSSSSSSS) show a composition bias toward low complexity. N-linked (GlcNAc...) asparagine glycosylation occurs at Asn-690. Asn-690 carries the GPI-anchor amidated asparagine lipid modification. A propeptide spans 691–714 (GSSKLSIGMTFMISGFATMFALFM) (removed in mature form).

Belongs to the HYR1/IFF family. The GPI-anchor is attached to the protein in the endoplasmic reticulum and serves to target the protein to the cell surface. There, the glucosamine-inositol phospholipid moiety is cleaved off and the GPI-modified mannoprotein is covalently attached via its lipidless GPI glycan remnant to the 1,6-beta-glucan of the outer cell wall layer.

The protein resides in the secreted. The protein localises to the cell wall. It localises to the membrane. GPI-anchored cell wall protein involved in cell wall organization, hyphal growth, as well as in host-fungal interaction and virulence. In Candida albicans (strain SC5314 / ATCC MYA-2876) (Yeast), this protein is Cell wall protein IFF7 (IFF8).